The primary structure comprises 2345 residues: Nonribisomal peptide synthetase malG (2345 aa).

Positions 226–620 are adenylation 1; that stretch reads FSEQAKKNPT…VGRMGTVVKV (395 aa). In terms of domain architecture, Carrier 1 spans 766–839; it reads TENETLLRLL…EAAGTMISAG (74 aa). An O-(pantetheine 4'-phosphoryl)serine modification is found at Ser800. The interval 877-1292 is condensation 1; that stretch reads EEIYPSTPLQ…LLCPSDKSKL (416 aa). Residues 1317–1707 form an adenylation 2 region; it reads VRSERTAVSA…GRKNREVKLR (391 aa). The Carrier 2 domain maps to 1843 to 1926; that stretch reads QPHESTALFV…DIARLIEGVK (84 aa). Ser1885 carries the O-(pantetheine 4'-phosphoryl)serine modification. The interval 1969–2256 is reductase (R) domain; the sequence is GMSVFLTGGT…PRQLNALQSE (288 aa).

This sequence belongs to the NRP synthetase family.

The enzyme catalyses L-proline + L-tryptophan + 2 ATP + NADPH = (S)-3-(indol-3-ylmethyl)-6,7,8,8a-tetrahydropyrrolo[1,2-a]pyrazin-1-one + 2 AMP + 2 diphosphate + NADP(+) + H2O + H(+). Nonribisomal peptide synthetase; part of the gene cluster that mediates the biosynthesis of malbrancheamide, a dichlorinated fungal indole alkaloid that belongs to a family of natural products containing a characteristic bicyclo[2.2.2]diazaoctane core. The first step of malbrancheamide biosynthesis involves coupling of L-proline and L-tryptophan by malG, a bimodular NRPS, to produce L-Pro-L-Trp aldehyde through reductive offloading. This compound undergoes spontaneous cyclization and dehydration to give a dienamine which is reverse prenylated at C-2 by malE. The other prenyltransferase present in the cluster, malB, displays modest activity, suggesting that may be a redundant gene in the pathway. Subsequently, a [4+2] Diels-Alder cyclo-addition catalyzed by the bifunctional enzyme malC forms the characteristic bicyclo[2.2.2]diazaoctane ring of premalbrancheamid. Finally, the flavin-dependent halogenase malA catalyzes the iterative dichlorination of the indole ring of premalbrancheamide to yield C-9 monochlorinated malbrancheamide B, C-8 monochlorinated isomalbrancheamide B, and dichlorinated malbrancheamide. MalA is also able to brominate premalbrancheamide at C-9 to yield malbrancheamide C, and, to a lesser extend, at C-8 to yield isomalbrancheamide C. Finally, malA can brominate C-9 monochlorinated malbrancheamide B at C-8 to yield malbrancheamide D, or C-8 monochlorinated isomalbrancheamide B at C-9 to produce isomalbrancheamide D. The sequence is that of Nonribisomal peptide synthetase malG from Malbranchea aurantiaca.